Reading from the N-terminus, the 171-residue chain is 3-hydroxydecanoyl-[acyl-carrier-protein] dehydratase (171 aa).

Histidine 70 is a catalytic residue.

It belongs to the thioester dehydratase family. FabA subfamily. In terms of assembly, homodimer.

The protein resides in the cytoplasm. The catalysed reaction is a (3R)-hydroxyacyl-[ACP] = a (2E)-enoyl-[ACP] + H2O. It carries out the reaction (3R)-hydroxydecanoyl-[ACP] = (2E)-decenoyl-[ACP] + H2O. It catalyses the reaction (2E)-decenoyl-[ACP] = (3Z)-decenoyl-[ACP]. The protein operates within lipid metabolism; fatty acid biosynthesis. Its function is as follows. Necessary for the introduction of cis unsaturation into fatty acids. Catalyzes the dehydration of (3R)-3-hydroxydecanoyl-ACP to E-(2)-decenoyl-ACP and then its isomerization to Z-(3)-decenoyl-ACP. Can catalyze the dehydratase reaction for beta-hydroxyacyl-ACPs with saturated chain lengths up to 16:0, being most active on intermediate chain length. This is 3-hydroxydecanoyl-[acyl-carrier-protein] dehydratase from Pseudoalteromonas translucida (strain TAC 125).